The primary structure comprises 380 residues: MGIHGLAKLIADHAPSAIKEHEIKSYFGRKIAIDASMCIYQFLIAVRQDGNVLQNEDGETTSHLMGMFYRTIRMLESGIKPVYVFDGKPPQLKSGELEKRVERRAEAEKLLAQAQEAGEQENIDKFSKRLVKVTKQHNEECKKLLSLMGVPYIEAPCEAEASCAALVKAGKVYATATEDMDGLTFGTTVLLRHLTASEAKKLPIQEFHFSRILQDMELTHQQFIDLCILLGCDYCGTIKGIGPKRAIDLIKQHGSIEEILENIDPNKHPAPEDWLYKEARGLFLEPEVVDGTSVDLKWNEPDEDGLIQFMCAEKQFSEDRIRNGCKKITKSRQGSTQGRLDTFFTVTGSISSKRKEPETKGSAKKKQKTSATPGKFKKGK.

The segment at 1 to 104 (MGIHGLAKLI…GELEKRVERR (104 aa)) is N-domain. Aspartate 34 provides a ligand contact to Mg(2+). Residues arginine 47 and arginine 70 each coordinate DNA. Mg(2+) contacts are provided by aspartate 86, glutamate 158, glutamate 160, aspartate 179, and aspartate 181. The interval 122–253 (NIDKFSKRLV…KRAIDLIKQH (132 aa)) is I-domain. Glutamate 158 serves as a coordination point for DNA. Glycine 231 and aspartate 233 together coordinate DNA. Aspartate 233 contacts Mg(2+). Residues 336-344 (TQGRLDTFF) form an interaction with PCNA region. The segment at 346–380 (VTGSISSKRKEPETKGSAKKKQKTSATPGKFKKGK) is disordered.

Belongs to the XPG/RAD2 endonuclease family. FEN1 subfamily. In terms of assembly, interacts with PCNA. Three molecules of fen1 bind to one PCNA trimer with each molecule binding to one PCNA monomer. PCNA stimulates the nuclease activity without altering cleavage specificity. Mg(2+) is required as a cofactor. In terms of processing, phosphorylated. Phosphorylation upon DNA damage induces relocalization to the nuclear plasma.

Its subcellular location is the nucleus. The protein localises to the nucleolus. It is found in the nucleoplasm. The protein resides in the mitochondrion. In terms of biological role, structure-specific nuclease with 5'-flap endonuclease and 5'-3' exonuclease activities involved in DNA replication and repair. During DNA replication, cleaves the 5'-overhanging flap structure that is generated by displacement synthesis when DNA polymerase encounters the 5'-end of a downstream Okazaki fragment. It enters the flap from the 5'-end and then tracks to cleave the flap base, leaving a nick for ligation. Also involved in the long patch base excision repair (LP-BER) pathway, by cleaving within the apurinic/apyrimidinic (AP) site-terminated flap. Acts as a genome stabilization factor that prevents flaps from equilibrating into structures that lead to duplications and deletions. Also possesses 5'-3' exonuclease activity on nicked or gapped double-stranded DNA, and exhibits RNase H activity. Also involved in replication and repair of rDNA and in repairing mitochondrial DNA. This is Flap endonuclease 1 (fen1) from Danio rerio (Zebrafish).